The primary structure comprises 279 residues: Troponin T, fast skeletal muscle (279 aa).

Positions 1–21 (MSDEEVEHVEEQYEEEEEAQE) are enriched in acidic residues. Positions 1–82 (MSDEEVEHVE…EKVDFDDIQK (82 aa)) are disordered. Position 2 is an N-acetylserine (Ser2). At Ser2 the chain carries Phosphoserine. Composition is skewed to basic and acidic residues over residues 28 to 49 (EVHE…ALED) and 70 to 82 (PEGE…DIQK). Ser98 is subject to Phosphoserine. The span at 121–163 (RAERAEQQRIRAEKERERQNRLAEEKARREEEDAKRRAEEDLK) shows a compositional bias: basic and acidic residues. Residues 121–200 (RAERAEQQRI…TAREMKKKIL (80 aa)) are disordered. A phosphoserine mark is found at Ser169, Ser176, and Ser177. Positions 191-200 (TAREMKKKIL) are enriched in basic and acidic residues. Ser213 carries the phosphoserine modification. Tyr229 carries the phosphotyrosine modification.

This sequence belongs to the troponin T family.

In terms of biological role, troponin T is the tropomyosin-binding subunit of troponin, the thin filament regulatory complex which confers calcium-sensitivity to striated muscle actomyosin ATPase activity. The polypeptide is Troponin T, fast skeletal muscle (TNNT3) (Oryctolagus cuniculus (Rabbit)).